A 226-amino-acid chain; its full sequence is SPI-1 type 3 secretion system stator protein (226 aa).

In terms of assembly, the core secretion machinery of the T3SS is composed of approximately 20 different proteins, including cytoplasmic components, a base, an export apparatus and a needle. This subunit is part of the cytosolic complex. Interacts directly with InvC/SctN1 (T3SS-1 ATPase) and SpaO/SctQ (the major sorting platform component).

The protein localises to the cytoplasm. Component of the type III secretion system (T3SS), also called injectisome, which is used to inject bacterial effector proteins into eukaryotic host cells. Acts as a regulator of the InvC/SctN1 ATPase activity. Required for invasion and secretion. This is SPI-1 type 3 secretion system stator protein from Salmonella typhimurium (strain SL1344).